The chain runs to 236 residues: GLIPR1-like protein 1 (236 aa).

The signal sequence occupies residues M1 to G27. An SCP domain is found at L46–Y178. N126 carries N-linked (GlcNAc...) asparagine glycosylation.

It belongs to the CRISP family. Part of a oolemmal binding multimeric complex (IZUMO1 complex) composed at least of IZUMO1 and GLIPR1L1; the complex assemblage is influenced by the maturation status of the male germ cell. Interacts with IZUMO1. Post-translationally, N-glycosylated. N-glycosylation decreases during the transit in the caput. Expressed in testis (at protein level). Little or no expression in other tissues tested.

It is found in the cytoplasmic vesicle. The protein resides in the secretory vesicle. It localises to the acrosome. Its subcellular location is the cell membrane. The protein localises to the membrane raft. It is found in the secreted. In terms of biological role, required for optimal fertilization at the stage of sperm-oocyte fusion, plays a role in optimizing acrosome function, the translocation of IZUMO1 during the acrosome reaction and the fertilization process. Component of epididymosomes, one type of membranous microvesicules which mediate the transfer of lipids and proteins to spermatozoa plasma membrane during epididymal maturation. Also component of the CD9-positive microvesicules found in the cauda region. The sequence is that of GLIPR1-like protein 1 from Mus musculus (Mouse).